We begin with the raw amino-acid sequence, 123 residues long: uncharacterized protein (123 aa).

A helical transmembrane segment spans residues 5-25 (GTLVIIFAIVLILCIMLLFFY). The disordered stretch occupies residues 32–53 (KSGVLPPPIPPPTPPPPKKKYD). Pro residues predominate over residues 36–47 (LPPPIPPPTPPP).

The protein belongs to the asfivirus CP123L family.

It localises to the host membrane. Its subcellular location is the virion. This is an uncharacterized protein from Ornithodoros (relapsing fever ticks).